We begin with the raw amino-acid sequence, 338 residues long: MAKWGEGDPRWIVEERADATNVNNWHWTERDASNWSTDKLKTLFLAVQVQNEEGKCEVTEVSKLDGEASINNRKGKLIFFYEWSVKLNWTGTSKSGVQYKGHVEIPNLSDENSVDEVEISVSLAKDEPDTNLVALMKEEGVKLLREAMGIYISTLKTEFTQGMILPTMNGESVDPVGQPALKTEERKAKPAPSKTQARPVGVKIPTCKITLKETFLTSPEELYRVFTTQELVQAFTHAPATLEADRGGKFHMVDGNVSGEFTDLVPEKHIVMKWRFKSWPEGHFATITLTFIDKNGETELCMEGRGIPAPEEERTRQGWQRYYFEGIKQTFGYGARLF.

Residue Lys3 is modified to N6-acetyllysine. Residue Lys182 forms a Glycyl lysine isopeptide (Lys-Gly) (interchain with G-Cter in SUMO1) linkage. A Phosphoserine modification is found at Ser193. A Glycyl lysine isopeptide (Lys-Gly) (interchain with G-Cter in SUMO2) cross-link involves residue Lys203. An N6-acetyllysine modification is found at Lys212. Phosphotyrosine; by ABL is present on Tyr223. Residue Ser258 is modified to Phosphoserine.

Belongs to the AHA1 family. Interacts with HSPCA/HSP90. Interacts (phosphorylated on Tyr-223) with HSP90AA1; the interaction activates HSP90AA1 ATPase activity. Interacts with HSP90AB1. Interacts with GCH1. Interacts with SRPK1. Interacts with FLCN. In terms of assembly, (Microbial infection) Interacts with vesicular stomatitis virus glycoprotein (VSV G) (via cytoplasmic tail). Post-translationally, phosphorylation at Tyr-223 enhances binding to chaperone HSP90AA1. As to expression, expressed in numerous tissues, including brain, heart, skeletal muscle and kidney and, at lower levels, liver and placenta.

The protein localises to the cytoplasm. It localises to the cytosol. Its subcellular location is the endoplasmic reticulum. Functionally, acts as a co-chaperone of HSP90AA1. Activates the ATPase activity of HSP90AA1 leading to increase in its chaperone activity. Competes with the inhibitory co-chaperone FNIP1 for binding to HSP90AA1, thereby providing a reciprocal regulatory mechanism for chaperoning of client proteins. Competes with the inhibitory co-chaperone TSC1 for binding to HSP90AA1, thereby providing a reciprocal regulatory mechanism for chaperoning of client proteins. The chain is Activator of 90 kDa heat shock protein ATPase homolog 1 (AHSA1) from Homo sapiens (Human).